Reading from the N-terminus, the 342-residue chain is Protein FDO1 (342 aa).

Disordered stretches follow at residues 1–36 (MEENKLSGNKPIQLATWSNQMGSPENNGNNANNGSD), 57–76 (MSPMEEEHSQPSSSQETLSV), and 299–322 (GRTITHNRPNTKDESIQDSHGNRT). Positions 15-25 (ATWSNQMGSPE) are enriched in polar residues. Residues 308–319 (NTKDESIQDSHG) show a composition bias toward basic and acidic residues.

As to quaternary structure, interacts with FKH1.

In terms of biological role, in concert with FKH1, plays a role in directionality of mating type switching by controlling which donor mating-type locus is inserted into MAT locus during mating type switching. The polypeptide is Protein FDO1 (Saccharomyces cerevisiae (strain ATCC 204508 / S288c) (Baker's yeast)).